Consider the following 125-residue polypeptide: Small ribosomal subunit protein uS12 (125 aa).

Asp89 is modified (3-methylthioaspartic acid).

The protein belongs to the universal ribosomal protein uS12 family. As to quaternary structure, part of the 30S ribosomal subunit. Contacts proteins S8 and S17. May interact with IF1 in the 30S initiation complex.

In terms of biological role, with S4 and S5 plays an important role in translational accuracy. Its function is as follows. Interacts with and stabilizes bases of the 16S rRNA that are involved in tRNA selection in the A site and with the mRNA backbone. Located at the interface of the 30S and 50S subunits, it traverses the body of the 30S subunit contacting proteins on the other side and probably holding the rRNA structure together. The combined cluster of proteins S8, S12 and S17 appears to hold together the shoulder and platform of the 30S subunit. This is Small ribosomal subunit protein uS12 from Bordetella petrii (strain ATCC BAA-461 / DSM 12804 / CCUG 43448).